The primary structure comprises 473 residues: Beta-secretase 1 (473 aa).

The first 21 residues, 1–21 (MAPALPWLLLWVGSGVLPVHG), serve as a signal peptide directing secretion. Positions 22–45 (TQDGIRLPLRSGLAGAPLGLRLPR) are excised as a propeptide. Residues 22–429 (TQDGIRLPLR…PQTDESTLMT (408 aa)) lie on the Extracellular side of the membrane. Residues 72-388 (YYVEMTVGSP…DRARKRIGFA (317 aa)) form the Peptidase A1 domain. Asp90 is a catalytic residue. At Lys123 the chain carries N6-acetyllysine. Asn150, Asn169, and Asn195 each carry an N-linked (GlcNAc...) asparagine glycan. 3 disulfide bridges follow: Cys188/Cys392, Cys250/Cys415, and Cys302/Cys352. N6-acetyllysine is present on residues Lys247, Lys251, and Lys257. Residue Asp261 is part of the active site. N6-acetyllysine is present on residues Lys271, Lys272, and Lys279. Asn326 is a glycosylation site (N-linked (GlcNAc...) asparagine). Residues 430–450 (IAYVMAAICALFMLPLCLMVC) form a helical membrane-spanning segment. Residues Cys446, Cys450, Cys454, and Cys457 are each lipidated (S-palmitoyl cysteine). The Cytoplasmic segment spans residues 451-473 (QWRCLRCLRHQHDDFADDISLLK). The segment at 451–473 (QWRCLRCLRHQHDDFADDISLLK) is interaction with RTN3. The DXXLL motif lies at 468 to 472 (DISLL). The residue at position 470 (Ser470) is a Phosphoserine. Lys473 participates in a covalent cross-link: Glycyl lysine isopeptide (Lys-Gly) (interchain with G-Cter in ubiquitin).

The protein belongs to the peptidase A1 family. As to quaternary structure, monomer. Interacts (via DXXLL motif) with GGA1, GGA2 and GGA3 (via their VHS domain); the interaction highly increases when BACE1 is phosphorylated at Ser-470. Interacts with RTN1; RTN2; RTN3 and RTN4; the interaction leads to inhibition of amyloid precursor protein processing. Interacts with SNX6. Interacts with PCSK9. Interacts with NAT8 and NAT8B. Interacts with BIN1. Interacts (via extracellular domain) with ADAM10 (via extracellular domain). Interacts with SORL1; this interaction may affect binding with APP and hence reduce APP cleavage. Interacts with NRDC AND NRG1. Palmitoylation mediates lipid raft localization. In terms of processing, acetylated in the endoplasmic reticulum at Lys-123, Lys-247, Lys-251, Lys-257, Lys-271, Lys-272, and Lys-279. Acetylation by NAT8 and NAT8B is transient and deacetylation probably occurs in the Golgi. Acetylation regulates the maturation, the transport to the plasma membrane, the stability and the expression of the protein. Post-translationally, ubiquitinated at Lys-473, ubiquitination leads to lysosomal degradation. Monoubiquitinated and 'Lys-63'-linked polyubitinated. Deubiquitnated by USP8; inhibits lysosomal degradation. Phosphorylation at Ser-470 is required for interaction with GGA1 and retrograded transport from endosomal compartments to the trans-Golgi network. Non-phosphorylated BACE1 enters a direct recycling route to the cell surface. In terms of processing, N-Glycosylated. Addition of a bisecting N-acetylglucosamine by MGAT3 blocks lysosomal targeting, further degradation and is required for maintaining stability under stress conditions.

The protein resides in the cell membrane. It is found in the golgi apparatus. Its subcellular location is the trans-Golgi network. It localises to the endoplasmic reticulum. The protein localises to the endosome. The protein resides in the cell surface. It is found in the cytoplasmic vesicle membrane. Its subcellular location is the membrane raft. It localises to the lysosome. The protein localises to the late endosome. The protein resides in the early endosome. It is found in the recycling endosome. Its subcellular location is the cell projection. It localises to the axon. The protein localises to the dendrite. It carries out the reaction Broad endopeptidase specificity. Cleaves Glu-Val-Asn-Leu-|-Asp-Ala-Glu-Phe in the Swedish variant of Alzheimer's amyloid precursor protein.. Inhibited by RTN3 and RTN4. Its function is as follows. Responsible for the proteolytic processing of the amyloid precursor protein (APP). Cleaves at the N-terminus of the A-beta peptide sequence, between residues 671 and 672 of APP, leads to the generation and extracellular release of beta-cleaved soluble APP, and a corresponding cell-associated C-terminal fragment which is later released by gamma-secretase. Cleaves CHL1. In Cavia porcellus (Guinea pig), this protein is Beta-secretase 1 (BACE1).